The chain runs to 786 residues: AT-rich interactive domain-containing protein 3 (786 aa).

Over residues 1–16 (MENLTEIESTMESLTE) the composition is skewed to low complexity. Disordered regions lie at residues 1–182 (MENL…HHAD), 199–251 (SGDH…IPAN), and 395–420 (DTTVDSTNNKDAHVEANTERQDNSSA). 2 stretches are compositionally biased toward basic and acidic residues: residues 18–64 (ESER…HEDS) and 87–97 (DLPKIDDEKNS). Residues 130–139 (ENIVSSEVSS) are compositionally biased toward low complexity. Basic and acidic residues-rich tracts occupy residues 141–156 (ILKDDGDAVEVDRDTA), 169–182 (KLSEDTGSPHHHAD), 199–219 (SGDHEEFPVNPDNKHSEENQS), 234–248 (AEEREIISPGEHKEI), and 402–416 (NNKDAHVEANTERQD). Positions 494-585 (EEDQSAFMKE…ALLEYERHKV (92 aa)) constitute an ARID domain. The tract at residues 606–638 (QASGSGRARRDAASRAMQGWHSQRLNGNGEVSD) is disordered. Residues 686-786 (VTVVDVGPPA…FVRVPLEQLE (101 aa)) enclose the sHSP domain.

Belongs to the small heat shock protein (HSP20) family.

Its subcellular location is the nucleus. The polypeptide is AT-rich interactive domain-containing protein 3 (ARID3) (Arabidopsis thaliana (Mouse-ear cress)).